Here is a 125-residue protein sequence, read N- to C-terminus: Protein Bouncer (125 aa).

Residues 1–18 (MGCVLLFLLLVCVPVVLP) form the signal peptide. Cystine bridges form between cysteine 23–cysteine 48, cysteine 26–cysteine 35, cysteine 42–cysteine 66, cysteine 72–cysteine 91, and cysteine 92–cysteine 97. One can recognise a UPAR/Ly6 domain in the interval 23-98 (CLFCPVTSLN…FSCCGGHYCN (76 aa)). N-linked (GlcNAc...) asparagine glycosylation is present at asparagine 32. Asparagine 84 carries N-linked (GlcNAc...) asparagine glycosylation. The GPI-anchor amidated asparagine moiety is linked to residue asparagine 98. Positions 99-125 (SQPRAEPGGRLLLLLLPAAALTAAGAL) are cleaved as a propeptide — removed in mature form.

Belongs to the SPACA4/bouncer family. As to quaternary structure, interacts with spermatocyte complex composed of izumo1, spaca6 and tmem81. N-glycosylated. In terms of tissue distribution, highly expressed in oocytes. Not expressed in testis.

The protein resides in the cell membrane. Oocyte-expressed fertilization factor that mediates sperm-egg binding and is essential for sperm entry into the egg. Necessary and sufficient to mediate species-specific gamete recognition and fertilization, which is essential for vertebrate species performing external fertilization. External fertilization cannot guarantee that only conspecific sperm reaches the egg by precopulatory mate choice: proteins such as Bouncer can therefore support the selection of conspecific sperm. The protein is Protein Bouncer of Danio rerio (Zebrafish).